Here is a 304-residue protein sequence, read N- to C-terminus: Glutaminase (304 aa).

Residues Ser-63, Asn-114, Glu-158, Asn-165, Tyr-189, Tyr-240, and Val-258 each contribute to the substrate site.

This sequence belongs to the glutaminase family. As to quaternary structure, homotetramer.

It catalyses the reaction L-glutamine + H2O = L-glutamate + NH4(+). This is Glutaminase from Shewanella baltica (strain OS223).